Reading from the N-terminus, the 293-residue chain is Extracellular metalloprotease PODANS_2_14170 (293 aa).

An N-terminal signal peptide occupies residues 1–18 (MRFSLALAAAGLAQTAFA). A glycan (N-linked (GlcNAc...) asparagine) is linked at N60. Position 206 (H206) interacts with Zn(2+). The active site involves E207. H210 contacts Zn(2+). The cysteines at positions 242 and 269 are disulfide-linked.

Belongs to the peptidase M43B family.

It is found in the secreted. In terms of biological role, secreted metalloproteinase that allows assimilation of proteinaceous substrates. This Podospora anserina (strain S / ATCC MYA-4624 / DSM 980 / FGSC 10383) (Pleurage anserina) protein is Extracellular metalloprotease PODANS_2_14170.